We begin with the raw amino-acid sequence, 318 residues long: tRNA methyltransferase 10 homolog B (318 aa).

Over residues 1–10 the composition is skewed to basic and acidic residues; it reads MDCKSEESAQ. The disordered stretch occupies residues 1–105; the sequence is MDCKSEESAQ…DPGNGTCPQH (105 aa). Over residues 52–63 the composition is skewed to polar residues; it reads SPANSAVWSSKN. Residues 64–83 are compositionally biased toward basic residues; that stretch reads MQRKQRHWERIVSSKKSKRK. Residues 72 to 93 adopt a coiled-coil conformation; the sequence is ERIVSSKKSKRKQERERRKAKR. Positions 84 to 96 are enriched in basic and acidic residues; that stretch reads QERERRKAKRAED. In terms of domain architecture, SAM-dependent MTase TRM10-type spans 114-311; sequence TKEKLLEAKH…KGVSPGKGYV (198 aa).

Belongs to the class IV-like SAM-binding methyltransferase superfamily. TRM10 family.

It catalyses the reaction guanosine(9) in tRNA + S-adenosyl-L-methionine = N(1)-methylguanosine(9) in tRNA + S-adenosyl-L-homocysteine + H(+). Functionally, S-adenosyl-L-methionine-dependent guanine N(1)-methyltransferase that catalyzes the formation of N(1)-methylguanine at position 9 (m1G9) in tRNAs. Probably not able to catalyze formation of N(1)-methyladenine at position 9 (m1A9) in tRNAs. The sequence is that of tRNA methyltransferase 10 homolog B (Trmt10b) from Mus musculus (Mouse).